Here is a 288-residue protein sequence, read N- to C-terminus: uncharacterized protein (288 aa).

This is an uncharacterized protein from Haemophilus influenzae (strain ATCC 51907 / DSM 11121 / KW20 / Rd).